Consider the following 333-residue polypeptide: Probable xyloglucan endotransglucosylase/hydrolase protein 27 (333 aa).

An N-terminal signal peptide occupies residues 1-20; sequence METLSRLLVFMSLFSGLVSG. Positions 21–223 constitute a GH16 domain; the sequence is FALQNLPITS…YKYAPYIARF (203 aa). Glu-108 functions as the Nucleophile in the catalytic mechanism. Residue Glu-112 is the Proton donor of the active site. Xyloglucan-binding positions include Glu-112 and 125 to 127; that span reads QTN. Residue Asn-131 is glycosylated (N-linked (GlcNAc...) asparagine). Residues 135–139, 202–203, Gly-207, and Arg-282 contribute to the xyloglucan site; these read HSGRE and KW. The cysteines at positions 277 and 290 are disulfide-linked. The interval 311–333 is disordered; the sequence is IPRRHRNGKHRSKRSRVDGTESI. Residues 312–324 show a composition bias toward basic residues; sequence PRRHRNGKHRSKR.

It belongs to the glycosyl hydrolase 16 family. XTH group 3 subfamily. Contains at least one intrachain disulfide bond essential for its enzymatic activity. As to expression, expressed in 7 day old seedlings, roots, hypocotyls, rosette leaves, internodes between nodes bearing axillary shoots, nodes bearing flowers, flower buds, anthers and siliques.

It localises to the secreted. It is found in the cell wall. The protein localises to the extracellular space. The protein resides in the apoplast. The enzyme catalyses breaks a beta-(1-&gt;4) bond in the backbone of a xyloglucan and transfers the xyloglucanyl segment on to O-4 of the non-reducing terminal glucose residue of an acceptor, which can be a xyloglucan or an oligosaccharide of xyloglucan.. Catalyzes xyloglucan endohydrolysis (XEH) and/or endotransglycosylation (XET). Cleaves and religates xyloglucan polymers, an essential constituent of the primary cell wall, and thereby participates in cell wall construction of growing tissues. Required for cell wall modification during the development of tracheary elements. In Arabidopsis thaliana (Mouse-ear cress), this protein is Probable xyloglucan endotransglucosylase/hydrolase protein 27 (XTH27).